The following is a 527-amino-acid chain: Palmitoleoyl-protein carboxylesterase NOTUM (527 aa).

Residues 1-19 (MKSYLILNTLLLSLLKING) form the signal peptide. Residues N64, N86, and N104 are each glycosylated (N-linked (GlcNAc...) asparagine). The active-site Charge relay system is the S203. The N-linked (GlcNAc...) asparagine glycan is linked to N249. Residues D311 and H359 each act as charge relay system in the active site. N-linked (GlcNAc...) asparagine glycosylation occurs at N451.

Belongs to the pectinacetylesterase family. Notum subfamily. As to expression, expressed in the anterior pole.

It localises to the secreted. The catalysed reaction is [Wnt protein]-O-(9Z)-hexadecenoyl-L-serine + H2O = [Wnt protein]-L-serine + (9Z)-hexadecenoate + H(+). Functionally, carboxylesterase that acts as a key negative regulator of the Wnt signaling pathway. Acts by specifically mediating depalmitoleoylation of WNT proteins. Serine palmitoleoylation of WNT proteins is required for efficient binding to frizzled receptors. Promotes head regeneration following amputation by inhibiting the Wnt signaling pathway. This Schmidtea mediterranea (Freshwater planarian flatworm) protein is Palmitoleoyl-protein carboxylesterase NOTUM.